Reading from the N-terminus, the 304-residue chain is tRNA uridine(34) hydroxylase (304 aa).

Residues Gln124 to Ser219 enclose the Rhodanese domain. Cys179 functions as the Cysteine persulfide intermediate in the catalytic mechanism.

It belongs to the TrhO family.

It carries out the reaction uridine(34) in tRNA + AH2 + O2 = 5-hydroxyuridine(34) in tRNA + A + H2O. Catalyzes oxygen-dependent 5-hydroxyuridine (ho5U) modification at position 34 in tRNAs. This is tRNA uridine(34) hydroxylase from Bartonella henselae (strain ATCC 49882 / DSM 28221 / CCUG 30454 / Houston 1) (Rochalimaea henselae).